The primary structure comprises 473 residues: Serine palmitoyltransferase 1 (473 aa).

The Lumenal segment spans residues 1–15; sequence MATVAEQWVLVEMVQ. The interaction with SPTLC2 stretch occupies residues 1–66; it reads MATVAEQWVL…KEELIEEWQP (66 aa). A helical transmembrane segment spans residues 16–36; it reads ALYEAPAYHLILEGILILWII. The Cytoplasmic portion of the chain corresponds to 37-473; the sequence is RLVFSKTYKL…IREAAQAVLL (437 aa). Residue Tyr164 is modified to Phosphotyrosine; by ABL.

Belongs to the class-II pyridoxal-phosphate-dependent aminotransferase family. As to quaternary structure, component of the serine palmitoyltransferase (SPT) complex, which is also composed of SPTLC2 or SPTLC3 and SPTSSA or SPTSSB. The heterodimer with SPTLC2 or SPTLC3 forms the catalytic core of the enzyme, while SPTSSA or SPTSSB subunits determine substrate specificity. SPT also interacts with ORMDL proteins, especially ORMDL3, which negatively regulate SPT activity in the presence of ceramides. Forms dimers of heterodimers with SPTLC2. Interacts with RTN4 (isoform B). Pyridoxal 5'-phosphate is required as a cofactor. In terms of processing, phosphorylation at Tyr-164 inhibits activity and promotes cell survival. As to expression, expressed in astrocytes.

It localises to the endoplasmic reticulum membrane. The enzyme catalyses L-serine + hexadecanoyl-CoA + H(+) = 3-oxosphinganine + CO2 + CoA. It catalyses the reaction octadecanoyl-CoA + L-serine + H(+) = 3-oxoeicosasphinganine + CO2 + CoA. It carries out the reaction tetradecanoyl-CoA + L-serine + H(+) = 3-oxohexadecasphinganine + CO2 + CoA. The catalysed reaction is dodecanoyl-CoA + L-serine + H(+) = 3-oxotetradecasphinganine + CO2 + CoA. The protein operates within lipid metabolism; sphingolipid metabolism. Its activity is regulated as follows. SPT complex catalytic activity is negatively regulated by ORMDL proteins, including ORMDL3, in the presence of ceramides. This mechanism allows to maintain ceramide levels at sufficient concentrations for the production of complex sphingolipids, but which prevents the accumulation of ceramides to levels that trigger apoptosis. Functionally, component of the serine palmitoyltransferase multisubunit enzyme (SPT) that catalyzes the initial and rate-limiting step in sphingolipid biosynthesis by condensing L-serine and activated acyl-CoA (most commonly palmitoyl-CoA) to form long-chain bases. The SPT complex is also composed of SPTLC2 or SPTLC3 and SPTSSA or SPTSSB. Within this complex, the heterodimer with SPTLC2 or SPTLC3 forms the catalytic core. The composition of the serine palmitoyltransferase (SPT) complex determines the substrate preference. The SPTLC1-SPTLC2-SPTSSA complex shows a strong preference for C16-CoA substrate, while the SPTLC1-SPTLC3-SPTSSA isozyme uses both C14-CoA and C16-CoA as substrates, with a slight preference for C14-CoA. The SPTLC1-SPTLC2-SPTSSB complex shows a strong preference for C18-CoA substrate, while the SPTLC1-SPTLC3-SPTSSB isozyme displays an ability to use a broader range of acyl-CoAs, without apparent preference. Required for adipocyte cell viability and metabolic homeostasis. In Rattus norvegicus (Rat), this protein is Serine palmitoyltransferase 1.